The chain runs to 352 residues: Ferrochelatase (352 aa).

Residues H222 and E303 each contribute to the Fe cation site.

Belongs to the ferrochelatase family.

The protein localises to the cytoplasm. It catalyses the reaction heme b + 2 H(+) = protoporphyrin IX + Fe(2+). Its pathway is porphyrin-containing compound metabolism; protoheme biosynthesis; protoheme from protoporphyrin-IX: step 1/1. Catalyzes the ferrous insertion into protoporphyrin IX. The protein is Ferrochelatase of Brucella abortus (strain S19).